The primary structure comprises 307 residues: Zygote arrest protein 2.L (307 aa).

The interval 138 to 200 (LPQGGRLPKK…EEPGNEEQTK (63 aa)) is disordered. Over residues 156 to 186 (LKERAPSPEDKEREKVSEKEPDTKDELEKRP) the composition is skewed to basic and acidic residues. A 3CxxC-type zinc finger spans residues 208–293 (QKYGYFHCKD…QELCGRCKNK (86 aa)).

The protein belongs to the ZAR1 family. Expressed in oocytes.

It is found in the cytoplasm. The protein localises to the cytoplasmic ribonucleoprotein granule. In terms of biological role, mRNA-binding protein required for maternal mRNA storage, translation and degradation during oocyte maturation. Probably promotes formation of some phase-separated membraneless compartment that stores maternal mRNAs in oocytes: acts by undergoing liquid-liquid phase separation upon binding to maternal mRNAs. Binds to the 3'-UTR of maternal mRNAs, inhibiting their translation. This Xenopus laevis (African clawed frog) protein is Zygote arrest protein 2.L (zar2.L).